A 148-amino-acid chain; its full sequence is Gas vesicle protein J (148 aa).

2 disordered regions span residues M1–T21 and E118–A148. Residues V136–A148 show a composition bias toward polar residues.

It belongs to the gas vesicle GvpA family. In terms of assembly, interacts with GvpA.

The protein localises to the gas vesicle. Its function is as follows. A minor component of the gas vesicle, might be involved in nucleating gas vesicle formation. Gas vesicles (GV) are hollow, gas filled proteinaceous nanostructures. During planktonic growth they allow positioning of the organism at a favorable depth for light or nutrient acquisition. In terms of biological role, cluster expression in E.coli (gvpA1-gvpA2-gvpC-gvpN-gvpJ-gvpK-gvpF-gvpG-gvpV-gvpW) allows cells to float and produces irregularly shaped gas vesicles. This Nostoc sp. (strain PCC 7120 / SAG 25.82 / UTEX 2576) protein is Gas vesicle protein J.